The following is an 82-amino-acid chain: Protein CYSTEINE-RICH TRANSMEMBRANE MODULE 13 (82 aa).

A disordered region spans residues 1–58 (MYHQEQHPVGAPPPQGYPPKDGYPPAGYPPAGYPPPGYAQGYPAQGYPPPQYSQAPQQ). Positions 26-37 (AGYPPAGYPPPG) are enriched in pro residues. A helical transmembrane segment spans residues 59–76 (KQNAGMLEGCLAALCCCC).

Belongs to the CYSTM1 family. As to quaternary structure, homodimer and heterodimers. Interacts with CYSTM7, CYTSM3, CYTSM4, CYTSM5, CYTSM6, CYTSM9, CYTSM10 and CYTSM11. Binds weakly to CYSTM1 and CYSTM2. In terms of tissue distribution, expressed in root meristem, root vasculature, leaf vasculature and floral organ primordia. Mostly expressed in roots and flowers and, to a lower extent, in stems, siliques and leaves.

It is found in the cell membrane. Its function is as follows. Required for the promotion of megasporogenesis, or promotion of germ cell formation from somatic precursor cells. Acts redundantly with WIH2. Functions in a genetic pathway downstream of SPL/NZZ and WUS and together with TRN2 in promoting megasporogenesis. Involved in resistance to abiotic stress. The sequence is that of Protein CYSTEINE-RICH TRANSMEMBRANE MODULE 13 from Arabidopsis thaliana (Mouse-ear cress).